Reading from the N-terminus, the 268-residue chain is UPF0739 protein C1orf74 homolog (268 aa).

The protein belongs to the UPF0739 family.

The chain is UPF0739 protein C1orf74 homolog from Salmo salar (Atlantic salmon).